Reading from the N-terminus, the 223-residue chain is Uracil phosphoribosyltransferase (223 aa).

5-phospho-alpha-D-ribose 1-diphosphate-binding positions include Arg86, Arg111, and Asp145 to Thr153. Uracil is bound by residues Ile209 and Gly214–Ala216. Asp215 serves as a coordination point for 5-phospho-alpha-D-ribose 1-diphosphate.

The protein belongs to the UPRTase family. Mg(2+) is required as a cofactor.

It carries out the reaction UMP + diphosphate = 5-phospho-alpha-D-ribose 1-diphosphate + uracil. Its pathway is pyrimidine metabolism; UMP biosynthesis via salvage pathway; UMP from uracil: step 1/1. Allosterically activated by GTP. In terms of biological role, catalyzes the conversion of uracil and 5-phospho-alpha-D-ribose 1-diphosphate (PRPP) to UMP and diphosphate. This Natronomonas pharaonis (strain ATCC 35678 / DSM 2160 / CIP 103997 / JCM 8858 / NBRC 14720 / NCIMB 2260 / Gabara) (Halobacterium pharaonis) protein is Uracil phosphoribosyltransferase.